Here is a 34-residue protein sequence, read N- to C-terminus: Protein MgtT (34 aa).

Residues 1–34 (MNGDNPSPNRPLVTVVYKGPDFYDGEKKPPVNRR) are disordered. The span at 24–34 (DGEKKPPVNRR) shows a compositional bias: basic and acidic residues.

In Escherichia coli (strain K12), this protein is Protein MgtT.